The following is a 349-amino-acid chain: Dihydroorotase (349 aa).

Positions 17 and 19 each coordinate Zn(2+). Residues histidine 19–arginine 21 and asparagine 45 each bind substrate. Zn(2+)-binding residues include lysine 103, histidine 140, and histidine 178. At lysine 103 the chain carries N6-carboxylysine. Histidine 140 contributes to the substrate binding site. Substrate is bound at residue leucine 224. A Zn(2+)-binding site is contributed by aspartate 252. Aspartate 252 is an active-site residue. Substrate is bound by residues histidine 256 and alanine 268.

Belongs to the metallo-dependent hydrolases superfamily. DHOase family. Class II DHOase subfamily. Homodimer. It depends on Zn(2+) as a cofactor.

It catalyses the reaction (S)-dihydroorotate + H2O = N-carbamoyl-L-aspartate + H(+). It functions in the pathway pyrimidine metabolism; UMP biosynthesis via de novo pathway; (S)-dihydroorotate from bicarbonate: step 3/3. Functionally, catalyzes the reversible cyclization of carbamoyl aspartate to dihydroorotate. The sequence is that of Dihydroorotase from Buchnera aphidicola subsp. Schizaphis graminum (strain Sg).